Consider the following 152-residue polypeptide: Methylglyoxal synthase (152 aa).

Residues 1–152 (MELTTRTIAA…YDRYLQQRLK (152 aa)) form the MGS-like domain. Residues H19, K23, 45 to 48 (TGTT), and 65 to 66 (SG) contribute to the substrate site. D71 functions as the Proton donor/acceptor in the catalytic mechanism. H98 lines the substrate pocket.

This sequence belongs to the methylglyoxal synthase family.

It carries out the reaction dihydroxyacetone phosphate = methylglyoxal + phosphate. Its function is as follows. Catalyzes the formation of methylglyoxal from dihydroxyacetone phosphate. The sequence is that of Methylglyoxal synthase from Yersinia enterocolitica serotype O:8 / biotype 1B (strain NCTC 13174 / 8081).